The chain runs to 100 residues: UPF0473 protein LMHCC_1068 (100 aa).

It belongs to the UPF0473 family.

In Listeria monocytogenes serotype 4a (strain HCC23), this protein is UPF0473 protein LMHCC_1068.